The following is a 350-amino-acid chain: Beta-hexosaminidase (350 aa).

Substrate contacts are provided by residues D73, R81, R148, and 178–179 (KH). The active-site Proton donor/acceptor is H191. The Nucleophile role is filled by D262.

It belongs to the glycosyl hydrolase 3 family. NagZ subfamily.

It localises to the cytoplasm. It carries out the reaction Hydrolysis of terminal non-reducing N-acetyl-D-hexosamine residues in N-acetyl-beta-D-hexosaminides.. It functions in the pathway cell wall biogenesis; peptidoglycan recycling. In terms of biological role, plays a role in peptidoglycan recycling by cleaving the terminal beta-1,4-linked N-acetylglucosamine (GlcNAc) from peptide-linked peptidoglycan fragments, giving rise to free GlcNAc, anhydro-N-acetylmuramic acid and anhydro-N-acetylmuramic acid-linked peptides. In Bordetella avium (strain 197N), this protein is Beta-hexosaminidase.